We begin with the raw amino-acid sequence, 237 residues long: N-(5'-phosphoribosyl)anthranilate isomerase (237 aa).

It belongs to the TrpF family.

It carries out the reaction N-(5-phospho-beta-D-ribosyl)anthranilate = 1-(2-carboxyphenylamino)-1-deoxy-D-ribulose 5-phosphate. Its pathway is amino-acid biosynthesis; L-tryptophan biosynthesis; L-tryptophan from chorismate: step 3/5. The chain is N-(5'-phosphoribosyl)anthranilate isomerase from Desulfitobacterium hafniense (strain Y51).